A 214-amino-acid polypeptide reads, in one-letter code: Serine protease inhibitor 2.1 (214 aa).

The protein belongs to the serpin family.

The protein is Serine protease inhibitor 2.1 of Rattus norvegicus (Rat).